Reading from the N-terminus, the 412-residue chain is Peptidase T (412 aa).

Residue His83 coordinates Zn(2+). Asp85 is a catalytic residue. A Zn(2+)-binding site is contributed by Asp145. Glu179 acts as the Proton acceptor in catalysis. Positions 180, 202, and 384 each coordinate Zn(2+).

This sequence belongs to the peptidase M20B family. Zn(2+) serves as cofactor.

It localises to the cytoplasm. It carries out the reaction Release of the N-terminal residue from a tripeptide.. Cleaves the N-terminal amino acid of tripeptides. This Fusobacterium nucleatum subsp. nucleatum (strain ATCC 25586 / DSM 15643 / BCRC 10681 / CIP 101130 / JCM 8532 / KCTC 2640 / LMG 13131 / VPI 4355) protein is Peptidase T.